Reading from the N-terminus, the 111-residue chain is Rubredoxin (111 aa).

Positions 11-62 (LDRFECRSCGYVYEPEKGDNKHDIAPETPFAELPINWRCPVCTAKKAAFTNI) constitute a Rubredoxin-like domain. Positions 16, 19, 49, and 52 each coordinate Fe cation.

Belongs to the rubredoxin family. It depends on Fe(3+) as a cofactor.

Its function is as follows. Rubredoxin is a small nonheme, iron protein lacking acid-labile sulfide. Its single Fe, chelated to 4 Cys, functions as an electron acceptor and may also stabilize the conformation of the molecule. Could be involved in hydrogenase-linked redox processes. The protein is Rubredoxin (rub) of Nostoc sp. (strain PCC 7120 / SAG 25.82 / UTEX 2576).